Reading from the N-terminus, the 178-residue chain is N-alpha-acetyltransferase 20 (178 aa).

Residues 2 to 157 (TTLRAFTCDD…DAYDMRKALS (156 aa)) enclose the N-acetyltransferase domain.

The protein belongs to the acetyltransferase family. ARD1 subfamily. Component of the N-terminal acetyltransferase B (NatB) complex which is composed of naa20 and naa25.

It is found in the cytoplasm. It localises to the nucleus. It carries out the reaction N-terminal L-methionyl-L-asparaginyl-[protein] + acetyl-CoA = N-terminal N(alpha)-acetyl-L-methionyl-L-asparaginyl-[protein] + CoA + H(+). It catalyses the reaction N-terminal L-methionyl-L-glutaminyl-[protein] + acetyl-CoA = N-terminal N(alpha)-acetyl-L-methionyl-L-glutaminyl-[protein] + CoA + H(+). The enzyme catalyses N-terminal L-methionyl-L-aspartyl-[protein] + acetyl-CoA = N-terminal N(alpha)-acetyl-L-methionyl-L-aspartyl-[protein] + CoA + H(+). The catalysed reaction is N-terminal L-methionyl-L-glutamyl-[protein] + acetyl-CoA = N-terminal N(alpha)-acetyl-L-methionyl-L-glutamyl-[protein] + CoA + H(+). Catalytic subunit of the NatB complex which catalyzes acetylation of the N-terminal methionine residues of peptides beginning with Met-Asp, Met-Glu, Met-Asn and Met-Gln. Proteins with cell cycle functions are overrepresented in the pool of NatB substrates. Required for maintaining the structure and function of actomyosin fibers and for proper cellular migration. In Danio rerio (Zebrafish), this protein is N-alpha-acetyltransferase 20 (naa20).